Consider the following 342-residue polypeptide: MRILGIETSCDETGVAIYDEEKGLIANQLYTQIALHADYGGVVPELASRDHIRKTAPLIQAALQQAGLEAKDIDGIAYTCGPGLVGALLVGSTIARSLAYAWNIKAIGVHHMEGHLLAPMLENNPPKFPFVALLVSGGHTQLVRVNAVGQYELLGESIDDAAGEAFDKTAKLLGLDYPGGSVLSRLAEQGNPERFFFPRPMTDRPGLDFSFSGLKTFAANTINQAIKQEGELTEQTKADIAYAFQQAVVDTLAIKCRRALKETGFKRLVIAGGVSANKQLRQSLADMMKQLKGEVFYPQPQFCTDNGAMIAYVGFLRLKQGEYSPLEIDVKPRWAMTELKAI.

Residues histidine 111 and histidine 115 each contribute to the Fe cation site. Residues 134–138 (LVSGG), aspartate 167, glycine 180, and asparagine 277 contribute to the substrate site. Residue aspartate 305 coordinates Fe cation.

This sequence belongs to the KAE1 / TsaD family. Fe(2+) is required as a cofactor.

The protein localises to the cytoplasm. It carries out the reaction L-threonylcarbamoyladenylate + adenosine(37) in tRNA = N(6)-L-threonylcarbamoyladenosine(37) in tRNA + AMP + H(+). Required for the formation of a threonylcarbamoyl group on adenosine at position 37 (t(6)A37) in tRNAs that read codons beginning with adenine. Is involved in the transfer of the threonylcarbamoyl moiety of threonylcarbamoyl-AMP (TC-AMP) to the N6 group of A37, together with TsaE and TsaB. TsaD likely plays a direct catalytic role in this reaction. This chain is tRNA N6-adenosine threonylcarbamoyltransferase, found in Histophilus somni (strain 2336) (Haemophilus somnus).